We begin with the raw amino-acid sequence, 386 residues long: Succinate--CoA ligase [ADP-forming] subunit beta (386 aa).

An ATP-grasp domain is found at 9–244 (KELLRKYGVV…FDEEDADEIE (236 aa)). ATP contacts are provided by residues K46, 53–55 (GRG), E99, A102, and E107. The Mg(2+) site is built by N199 and D213. Residues N264 and 321 to 323 (GIM) contribute to the substrate site.

This sequence belongs to the succinate/malate CoA ligase beta subunit family. In terms of assembly, heterotetramer of two alpha and two beta subunits. Requires Mg(2+) as cofactor.

It carries out the reaction succinate + ATP + CoA = succinyl-CoA + ADP + phosphate. The enzyme catalyses GTP + succinate + CoA = succinyl-CoA + GDP + phosphate. It functions in the pathway carbohydrate metabolism; tricarboxylic acid cycle; succinate from succinyl-CoA (ligase route): step 1/1. Succinyl-CoA synthetase functions in the citric acid cycle (TCA), coupling the hydrolysis of succinyl-CoA to the synthesis of either ATP or GTP and thus represents the only step of substrate-level phosphorylation in the TCA. The beta subunit provides nucleotide specificity of the enzyme and binds the substrate succinate, while the binding sites for coenzyme A and phosphate are found in the alpha subunit. The polypeptide is Succinate--CoA ligase [ADP-forming] subunit beta (Aromatoleum aromaticum (strain DSM 19018 / LMG 30748 / EbN1) (Azoarcus sp. (strain EbN1))).